We begin with the raw amino-acid sequence, 1192 residues long: Protein argonaute 13 (1192 aa).

One can recognise a PAZ domain in the interval 183 to 296 (TVIQFVEEFL…LPMEVCKIVE (114 aa)). A Piwi domain is found at 472–770 (LLIVILLEVS…AASHAHCCIK (299 aa)).

The protein belongs to the argonaute family. Ago subfamily.

Its function is as follows. Probably involved in the RNA silencing pathway. May bind to short RNAs such as microRNAs (miRNAs) or short interfering RNAs (siRNAs), and represses the translation of mRNAs which are complementary to them. The sequence is that of Protein argonaute 13 (AGO13) from Oryza sativa subsp. japonica (Rice).